A 1034-amino-acid polypeptide reads, in one-letter code: Enteropeptidase (1034 aa).

Positions 1 to 51 (MGSKRIIPSRHRSLSTYEVMFTALFAILMVLCAGLIAVSWLTIKGSEKDAA) are excised as a propeptide. Residues 2–18 (GSKRIIPSRHRSLSTYE) are Cytoplasmic-facing. The helical; Signal-anchor for type II membrane protein transmembrane segment at 19-47 (VMFTALFAILMVLCAGLIAVSWLTIKGSE) threads the bilayer. Topologically, residues 48 to 1034 (KDAALGKSHE…FTEWIQSFLH (987 aa)) are extracellular. One can recognise an SEA domain in the interval 54-169 (KSHEARGTMK…NSIDITESLE (116 aa)). 4 N-linked (GlcNAc...) asparagine glycosylation sites follow: asparagine 116, asparagine 147, asparagine 170, and asparagine 194. Positions 197–238 (IECLPGSRPCADALKCIAVDLFCDGELNCPDGSDEDSKICAT) constitute an LDL-receptor class A 1 domain. 4 cysteine pairs are disulfide-bonded: cysteine 199/cysteine 212, cysteine 206/cysteine 225, cysteine 219/cysteine 236, and cysteine 240/cysteine 268. In terms of domain architecture, CUB 1 spans 240-349 (CDGKFLLTES…IGFNATYTAF (110 aa)). N-linked (GlcNAc...) asparagine glycosylation is found at asparagine 283, asparagine 343, asparagine 350, asparagine 403, asparagine 455, asparagine 485, asparagine 518, asparagine 549, and asparagine 645. The MAM domain maps to 357-519 (DEKINCNFED…ISLTYGICNV (163 aa)). Cysteine 539 and cysteine 567 are joined by a disulfide. The CUB 2 domain occupies 539–649 (CGGPFELWEP…GGFKANFTTG (111 aa)). Residues 656–694 (EPCKEDNFQCENGECVLLVNLCDGFSHCKDGSDEAHCVR) form the LDL-receptor class A 2 domain. Intrachain disulfides connect cysteine 658–cysteine 670, cysteine 665–cysteine 683, and cysteine 677–cysteine 692. One can recognise an SRCR domain in the interval 693-786 (VRFLNGTANN…LILLQCNHKS (94 aa)). 5 N-linked (GlcNAc...) asparagine glycosylation sites follow: asparagine 697, asparagine 701, asparagine 721, asparagine 740, and asparagine 761. Cystine bridges form between cysteine 772-cysteine 782, cysteine 787-cysteine 911, cysteine 825-cysteine 841, cysteine 925-cysteine 992, cysteine 956-cysteine 971, and cysteine 982-cysteine 1010. The region spanning 800-1034 (IVGGNDSREG…FTEWIQSFLH (235 aa)) is the Peptidase S1 domain. The N-linked (GlcNAc...) asparagine glycan is linked to asparagine 804. Histidine 840 serves as the catalytic Charge relay system. N-linked (GlcNAc...) asparagine glycosylation occurs at asparagine 863. The Charge relay system role is filled by aspartate 891. Residues asparagine 902 and asparagine 964 are each glycosylated (N-linked (GlcNAc...) asparagine). Serine 986 acts as the Charge relay system in catalysis.

It belongs to the peptidase S1 family. Heterotrimer of a catalytic (light) chain, a multidomain (heavy) chain, and a mini chain. The chains are derived from a single precursor that is cleaved by a trypsin-like protease. Post-translationally, the mini chain may be cleaved by elastase.

The protein resides in the membrane. The catalysed reaction is Activation of trypsinogen by selective cleavage of 6-Lys-|-Ile-7 bond.. Its function is as follows. Responsible for initiating activation of pancreatic proteolytic proenzymes (trypsin, chymotrypsin and carboxypeptidase A). It catalyzes the conversion of trypsinogen to trypsin which in turn activates other proenzymes including chymotrypsinogen, procarboxypeptidases, and proelastases. In Sus scrofa (Pig), this protein is Enteropeptidase (TMPRSS15).